We begin with the raw amino-acid sequence, 332 residues long: Protein EXORDIUM-like 6 (332 aa).

Residues 1–27 form the signal peptide; sequence MAMASASSSSSSISVIIFLLLAPLCLS. Residues Asn-36, Asn-102, and Asn-143 are each glycosylated (N-linked (GlcNAc...) asparagine).

This sequence belongs to the EXORDIUM family.

It localises to the secreted. The protein localises to the extracellular space. The protein resides in the apoplast. In terms of biological role, may play a role in a brassinosteroid-dependent regulation of growth and development. This is Protein EXORDIUM-like 6 (EXL6) from Arabidopsis thaliana (Mouse-ear cress).